Here is a 529-residue protein sequence, read N- to C-terminus: Beta-hexosaminidase subunit alpha (529 aa).

A signal peptide spans 1–22 (MASSRLWFSLLLAAALAGRATA). The propeptide occupies 23-88 (LWPWPQNIQT…PRPYLTGKRH (66 aa)). Cys58 and Cys104 are joined by a disulfide. 3 N-linked (GlcNAc...) asparagine glycosylation sites follow: Asn115, Asn157, and Asn295. A disulfide bridge links Cys277 with Cys328. Glu323 acts as the Proton donor in catalysis. Residues 423 to 424 (NR) form a critical for hydrolysis GM2 gangliosides region. Cys505 and Cys522 form a disulfide bridge.

This sequence belongs to the glycosyl hydrolase 20 family. There are 3 beta-hexosaminidase isozymes: isozyme A (hexosaminidase A) is a heterodimer composed of one subunit alpha and one subunit beta (chain A and B); isozyme B (hexosaminidase B) is a homodimer of two beta subunits (two chains A and B); isozyme S (hexosaminidase S) is a homodimer of two alpha subunits. The composition of the dimer (isozyme A versus isozyme S) has a significant effect on the substrate specificity of the alpha subunit active site.

The protein resides in the lysosome. It carries out the reaction Hydrolysis of terminal non-reducing N-acetyl-D-hexosamine residues in N-acetyl-beta-D-hexosaminides.. The catalysed reaction is N-acetyl-beta-D-galactosaminyl-(1-&gt;4)-beta-D-3-sulfogalactosyl-(1-&gt;4)-beta-D-glucosyl-(1&lt;-&gt;1')-ceramide + H2O = a beta-D-3-sulfogalactosyl-(1-&gt;4)-beta-D-glucosyl-(1&lt;-&gt;1')-ceramide + N-acetyl-beta-D-galactosamine. The enzyme catalyses a ganglioside GM2 (d18:1(4E)) + H2O = a ganglioside GM3 (d18:1(4E)) + N-acetyl-beta-D-galactosamine. It catalyses the reaction a ganglioside GM2 + H2O = a ganglioside GM3 + N-acetyl-beta-D-galactosamine. It carries out the reaction beta-D-GalNAc-(1-&gt;4)-alpha-L-IdoA-(1-&gt;3)-beta-D-GalNAc-4-sulfate-(1-&gt;4)-alpha-L-IdoA-(1-&gt;3)-D-GalNAc-4-sulfate + H2O = alpha-L-IdoA-(1-&gt;3)-beta-D-GalNAc-4-sulfate-(1-&gt;4)-alpha-L-IdoA-(1-&gt;3)-D-GalNAc-4-sulfate + N-acetyl-D-galactosamine. The catalysed reaction is N-acetyl-beta-D-6-sulfogalactosaminyl-(1-&gt;4)-alpha-L-iduronyl-(1-&gt;3)-N-acetyl-D-6-sulfogalactosamine + H2O = alpha-L-iduronyl-(1-&gt;3)-N-acetyl-D-6-sulfogalactosamine + N-acetyl-D-6-sulfogalactosamine. Its activity is regulated as follows. Addition of GM2A stimulates the hydrolysis of sulfated glycosphingolipid SM2 and the ganglioside GM2. Its function is as follows. Hydrolyzes the non-reducing end N-acetyl-D-hexosamine and/or sulfated N-acetyl-D-hexosamine of glycoconjugates, such as the oligosaccharide moieties from proteins and neutral glycolipids, or from certain mucopolysaccharides. The isozyme S is as active as the isozyme A on the anionic bis-sulfated glycans, the chondroitin-6-sulfate trisaccharide (C6S-3), and the dermatan sulfate pentasaccharide, and the sulfated glycosphingolipid SM2. The isozyme B does not hydrolyze each of these substrates, however hydrolyzes efficiently neutral oligosaccharide. Only the isozyme A is responsible for the degradation of GM2 gangliosides in the presence of GM2A. The polypeptide is Beta-hexosaminidase subunit alpha (Pongo abelii (Sumatran orangutan)).